The primary structure comprises 258 residues: Large ribosomal subunit protein bL28m (258 aa).

The transit peptide at 1 to 21 directs the protein to the mitochondrion; it reads MQKIFRPFQLTRGFTSSVKNF.

It belongs to the bacterial ribosomal protein bL28 family. Component of the mitochondrial large ribosomal subunit (mt-LSU). Mature yeast 74S mitochondrial ribosomes consist of a small (37S) and a large (54S) subunit. The 37S small subunit contains a 15S ribosomal RNA (15S mt-rRNA) and 34 different proteins. The 54S large subunit contains a 21S rRNA (21S mt-rRNA) and 46 different proteins.

It is found in the mitochondrion. In terms of biological role, component of the mitochondrial ribosome (mitoribosome), a dedicated translation machinery responsible for the synthesis of mitochondrial genome-encoded proteins, including at least some of the essential transmembrane subunits of the mitochondrial respiratory chain. The mitoribosomes are attached to the mitochondrial inner membrane and translation products are cotranslationally integrated into the membrane. The sequence is that of Large ribosomal subunit protein bL28m (MRPL24) from Saccharomyces cerevisiae (strain ATCC 204508 / S288c) (Baker's yeast).